A 204-amino-acid polypeptide reads, in one-letter code: Transcriptional regulator GfcR 1 (204 aa).

Belongs to the purine/pyrimidine phosphoribosyltransferase family. GfcR subfamily.

The sequence is that of Transcriptional regulator GfcR 1 from Methanosarcina barkeri (strain Fusaro / DSM 804).